We begin with the raw amino-acid sequence, 665 residues long: BTB/POZ domain-containing protein At1g30440 (665 aa).

The region spanning 28-98 is the BTB domain; the sequence is SDIVVEVGEM…CYGVKLELTA (71 aa). Residues 214–508 form the NPH3 domain; the sequence is DWWYEDASML…VQVLFFEQLQ (295 aa). Positions 260 to 280 are disordered; it reads LKRRRGGPESSGRFSTPLGSG. A compositionally biased stretch (polar residues) spans 271–280; that stretch reads GRFSTPLGSG. At Ser-279 the chain carries Phosphoserine. A coiled-coil region spans residues 281-306; that stretch reads NVLSEEEQKNLLEEIQELLRMQKGLV. Tyr-449 is subject to Phosphotyrosine. Polar residues predominate over residues 626–639; that stretch reads SAQEGSVSKSNNEN. Residues 626 to 665 form a disordered region; the sequence is SAQEGSVSKSNNENVKIEKLKDVKERRGKHKKASSISSER. Basic and acidic residues predominate over residues 640 to 650; that stretch reads VKIEKLKDVKE.

The protein belongs to the NPH3 family.

It functions in the pathway protein modification; protein ubiquitination. Its function is as follows. May act as a substrate-specific adapter of an E3 ubiquitin-protein ligase complex (CUL3-RBX1-BTB) which mediates the ubiquitination and subsequent proteasomal degradation of target proteins. The protein is BTB/POZ domain-containing protein At1g30440 of Arabidopsis thaliana (Mouse-ear cress).